The chain runs to 129 residues: Cytochrome c oxidase subunit 5B, mitochondrial (129 aa).

A mitochondrion-targeting transit peptide spans 1–31 (MASRLLRGAGALAAQTLRARGPNGVAVVRSM). 2 positions are modified to N6-acetyllysine: lysine 68 and lysine 86. Residues cysteine 91, cysteine 93, cysteine 113, and cysteine 116 each coordinate Zn(2+). Lysine 121 is modified (N6-acetyllysine).

This sequence belongs to the cytochrome c oxidase subunit 5B family. In terms of assembly, component of the cytochrome c oxidase (complex IV, CIV), a multisubunit enzyme composed of 14 subunits. The complex is composed of a catalytic core of 3 subunits MT-CO1, MT-CO2 and MT-CO3, encoded in the mitochondrial DNA, and 11 supernumerary subunits COX4I, COX5A, COX5B, COX6A, COX6B, COX6C, COX7A, COX7B, COX7C, COX8 and NDUFA4, which are encoded in the nuclear genome. The complex exists as a monomer or a dimer and forms supercomplexes (SCs) in the inner mitochondrial membrane with NADH-ubiquinone oxidoreductase (complex I, CI) and ubiquinol-cytochrome c oxidoreductase (cytochrome b-c1 complex, complex III, CIII), resulting in different assemblies (supercomplex SCI(1)III(2)IV(1) and megacomplex MCI(2)III(2)IV(2)).

Its subcellular location is the mitochondrion inner membrane. Its pathway is energy metabolism; oxidative phosphorylation. Functionally, component of the cytochrome c oxidase, the last enzyme in the mitochondrial electron transport chain which drives oxidative phosphorylation. The respiratory chain contains 3 multisubunit complexes succinate dehydrogenase (complex II, CII), ubiquinol-cytochrome c oxidoreductase (cytochrome b-c1 complex, complex III, CIII) and cytochrome c oxidase (complex IV, CIV), that cooperate to transfer electrons derived from NADH and succinate to molecular oxygen, creating an electrochemical gradient over the inner membrane that drives transmembrane transport and the ATP synthase. Cytochrome c oxidase is the component of the respiratory chain that catalyzes the reduction of oxygen to water. Electrons originating from reduced cytochrome c in the intermembrane space (IMS) are transferred via the dinuclear copper A center (CU(A)) of subunit 2 and heme A of subunit 1 to the active site in subunit 1, a binuclear center (BNC) formed by heme A3 and copper B (CU(B)). The BNC reduces molecular oxygen to 2 water molecules using 4 electrons from cytochrome c in the IMS and 4 protons from the mitochondrial matrix. This chain is Cytochrome c oxidase subunit 5B, mitochondrial (COX5B), found in Sus scrofa (Pig).